A 130-amino-acid polypeptide reads, in one-letter code: Holo-[acyl-carrier-protein] synthase (130 aa).

Mg(2+)-binding residues include aspartate 9 and glutamate 58.

The protein belongs to the P-Pant transferase superfamily. AcpS family. Requires Mg(2+) as cofactor.

It localises to the cytoplasm. It carries out the reaction apo-[ACP] + CoA = holo-[ACP] + adenosine 3',5'-bisphosphate + H(+). In terms of biological role, transfers the 4'-phosphopantetheine moiety from coenzyme A to a Ser of acyl-carrier-protein. The chain is Holo-[acyl-carrier-protein] synthase from Mycobacterium leprae (strain Br4923).